Reading from the N-terminus, the 232-residue chain is Secreted LysM effector Mg3LysM (232 aa).

A signal peptide spans 1–16 (MQNIFLAATLLGAAFA). The region spanning 47 to 91 (TNYTVKAGDTLGAIAKQYNSGVCDIAKVNGIDNPDYIKPDQVLSI) is the LysM 1 domain. Asn-48, Asn-100, Asn-138, Asn-195, Asn-209, and Asn-227 each carry an N-linked (GlcNAc...) asparagine glycan. 2 LysM domains span residues 120–165 (STYT…VINT) and 177–221 (GTYV…IIIL).

Belongs to the secreted LysM effector family.

Secreted effector that enables the plant pathogenic fungus to manipulate host defenses for successful infection. Binds chitin fragments and blocks the activation of chitin-induced plant defense responses. Protects fungal hyphae against hydrolytic plant enzymes. This Zymoseptoria tritici (strain CBS 115943 / IPO323) (Speckled leaf blotch fungus) protein is Secreted LysM effector Mg3LysM.